Here is a 329-residue protein sequence, read N- to C-terminus: uncharacterized protein (329 aa).

2 coiled-coil regions span residues 57–119 and 224–250; these read KKEE…LQEV and AQRQ…LGNV.

This is an uncharacterized protein from Macaca fascicularis (Crab-eating macaque).